Reading from the N-terminus, the 103-residue chain is MTGRGKGGKGLGKGGAKRHRKVLRDNIQGITKPAIRRLARRGGVKRISGLIYEETRGVLKVFWQNVIRDAVTYTEHAKRKTVTAMDVVYALKRQGRTLYGFGG.

The segment covering 1-14 has biased composition (gly residues); it reads MTGRGKGGKGLGKG. Positions 1-20 are disordered; the sequence is MTGRGKGGKGLGKGGAKRHR. 2 positions are modified to N6-acetyl-N6-methyllysine; alternate: Lys-6 and Lys-13. A DNA-binding region spans residues 17-21; it reads KRHRK.

This sequence belongs to the histone H4 family. In terms of assembly, the nucleosome is a histone octamer containing two molecules each of H2A, H2B, H3 and H4 assembled in one H3-H4 heterotetramer and two H2A-H2B heterodimers. The octamer wraps approximately 147 bp of DNA.

It is found in the nucleus. It localises to the chromosome. Its function is as follows. Core component of nucleosome. Nucleosomes wrap and compact DNA into chromatin, limiting DNA accessibility to the cellular machineries which require DNA as a template. Histones thereby play a central role in transcription regulation, DNA repair, DNA replication and chromosomal stability. DNA accessibility is regulated via a complex set of post-translational modifications of histones, also called histone code, and nucleosome remodeling. This chain is Histone H4, found in Diadromus pulchellus (Parasitic wasp).